We begin with the raw amino-acid sequence, 334 residues long: D-fructose 1,6-bisphosphatase class 2/sedoheptulose 1,7-bisphosphatase (334 aa).

D33, E57, D85, and E88 together coordinate Mn(2+). Substrate is bound by residues 88 to 90 (EGT), Y119, 164 to 166 (RAR), and 186 to 188 (DGD). E213 is a Mn(2+) binding site.

This sequence belongs to the FBPase class 2 family. In terms of assembly, homotetramer. Requires Mn(2+) as cofactor.

The enzyme catalyses beta-D-fructose 1,6-bisphosphate + H2O = beta-D-fructose 6-phosphate + phosphate. It catalyses the reaction D-sedoheptulose 1,7-bisphosphate + H2O = D-sedoheptulose 7-phosphate + phosphate. It participates in carbohydrate biosynthesis; Calvin cycle. Catalyzes the hydrolysis of fructose 1,6-bisphosphate (Fru 1,6-P2) and sedoheptulose 1,7-bisphosphate (Sed 1,7-P2) to fructose 6-phosphate and sedoheptulose 7-phosphate, respectively. This Synechococcus sp. (strain CC9902) protein is D-fructose 1,6-bisphosphatase class 2/sedoheptulose 1,7-bisphosphatase.